The chain runs to 400 residues: 3-phenylpropionate/cinnamic acid dioxygenase ferredoxin--NAD(+) reductase component (400 aa).

5 to 36 lines the FAD pocket; that stretch reads TIIIVGGGQAAAMAAASLRQQGFTGELHLFSD. 146–174 lines the NAD(+) pocket; the sequence is SVVIVGAGTIGLELAASATQRGCKVTVIE.

Belongs to the bacterial ring-hydroxylating dioxygenase ferredoxin reductase family. As to quaternary structure, this dioxygenase system consists of four proteins: the two subunits of the hydroxylase component (HcaE and HcaF), a ferredoxin (HcaC) and a ferredoxin reductase (HcaD). It depends on FAD as a cofactor.

The catalysed reaction is 2 reduced [2Fe-2S]-[ferredoxin] + NAD(+) + H(+) = 2 oxidized [2Fe-2S]-[ferredoxin] + NADH. It functions in the pathway aromatic compound metabolism; 3-phenylpropanoate degradation. Functionally, part of the multicomponent 3-phenylpropionate dioxygenase, that converts 3-phenylpropionic acid (PP) and cinnamic acid (CI) into 3-phenylpropionate-dihydrodiol (PP-dihydrodiol) and cinnamic acid-dihydrodiol (CI-dihydrodiol), respectively. The sequence is that of 3-phenylpropionate/cinnamic acid dioxygenase ferredoxin--NAD(+) reductase component from Escherichia coli (strain SMS-3-5 / SECEC).